Consider the following 347-residue polypeptide: uncharacterized protein (347 aa).

10 helical membrane passes run 15–35, 46–66, 84–104, 111–131, 149–169, 182–202, 214–234, 249–269, 283–303, and 312–332; these read FVPS…DSLL, VAVG…VPWV, VLSA…ADFI, FWGG…SLIV, GWYI…LIMP, INYF…AVVI, AMAP…VALI, FYIF…MAII, AMSW…SHLV, and IDYI…ITLI.

It belongs to the tellurite-resistance/dicarboxylate transporter (TDT) family.

The protein resides in the cell membrane. This is an uncharacterized protein from Methanocaldococcus jannaschii (strain ATCC 43067 / DSM 2661 / JAL-1 / JCM 10045 / NBRC 100440) (Methanococcus jannaschii).